We begin with the raw amino-acid sequence, 155 residues long: Large ribosomal subunit protein eL24A (155 aa).

Residue Ser-7 is modified to Phosphoserine. The tract at residues 66–155 is disordered; the sequence is EVAKKRSRKT…AFQKVAATSR (90 aa). A compositionally biased stretch (basic and acidic residues) spans 89 to 129; sequence LIKERRSLKPEVRKANREEKLKANKEKKKAEKAARKAEKAK. Positions 131 to 142 are enriched in polar residues; it reads AGTQSSKFSKQQ.

The protein belongs to the eukaryotic ribosomal protein eL24 family. As to quaternary structure, component of the large ribosomal subunit (LSU). Mature yeast ribosomes consist of a small (40S) and a large (60S) subunit. The 40S small subunit contains 1 molecule of ribosomal RNA (18S rRNA) and 33 different proteins (encoded by 57 genes). The large 60S subunit contains 3 rRNA molecules (25S, 5.8S and 5S rRNA) and 46 different proteins (encoded by 81 genes).

The protein localises to the cytoplasm. In terms of biological role, component of the ribosome, a large ribonucleoprotein complex responsible for the synthesis of proteins in the cell. The small ribosomal subunit (SSU) binds messenger RNAs (mRNAs) and translates the encoded message by selecting cognate aminoacyl-transfer RNA (tRNA) molecules. The large subunit (LSU) contains the ribosomal catalytic site termed the peptidyl transferase center (PTC), which catalyzes the formation of peptide bonds, thereby polymerizing the amino acids delivered by tRNAs into a polypeptide chain. The nascent polypeptides leave the ribosome through a tunnel in the LSU and interact with protein factors that function in enzymatic processing, targeting, and the membrane insertion of nascent chains at the exit of the ribosomal tunnel. The protein is Large ribosomal subunit protein eL24A of Saccharomyces cerevisiae (strain ATCC 204508 / S288c) (Baker's yeast).